The sequence spans 1195 residues: Phosphatidylinositol-3,5-bisphosphate 3-phosphatase MTMR4 (1195 aa).

S8 is subject to Phosphoserine. Residues 153 to 570 enclose the Myotubularin phosphatase domain; the sequence is EHIRCRQEAE…RALHLWTAVY (418 aa). The a 1,2-diacyl-sn-glycero-3-phospho-(1D-myo-inositol-3,5-bisphosphate) site is built by N320, N345, and I346. N320, N345, and I346 together coordinate a 1,2-diacyl-sn-glycero-3-phospho-(1D-myo-inositol-3-phosphate). Catalysis depends on C407, which acts as the Phosphocysteine intermediate. Residues S408, D409, G410, W411, D412, R413, K449, and R453 each coordinate a 1,2-diacyl-sn-glycero-3-phospho-(1D-myo-inositol-3,5-bisphosphate). S408, D409, G410, W411, D412, and R413 together coordinate a 1,2-diacyl-sn-glycero-3-phospho-(1D-myo-inositol-3-phosphate). R453 contacts a 1,2-diacyl-sn-glycero-3-phospho-(1D-myo-inositol-3-phosphate). 2 positions are modified to phosphoserine: S610 and S629. Disordered regions lie at residues 645–756, 780–800, and 827–877; these read EPWH…EHCP, ESSQNSPTGTPQQAQPDSMLG, and DPST…LLEN. Basic and acidic residues predominate over residues 720–729; it reads PEIKVLEETK. 2 stretches are compositionally biased toward polar residues: residues 780 to 795 and 831 to 854; these read ESSQNSPTGTPQQAQP and DFLNQDPSGSVASISHQEQLSSVP. A PY-motif; substrate motif for NEDD4 motif is present at residues 1004–1008; it reads VPPLY. Residues 1023-1055 are a coiled coil; that stretch reads HRLRQIEAGYKQEVEQLRRQVRELQMRLDIRHC. The FYVE-type zinc-finger motif lies at 1114 to 1174; that stretch reads DHMASHCYNC…VCNSCYEHIQ (61 aa). 8 residues coordinate Zn(2+): C1120, C1123, C1136, C1139, C1144, C1147, C1166, and C1169.

This sequence belongs to the protein-tyrosine phosphatase family. Non-receptor class myotubularin subfamily. In terms of assembly, homooligomeric. Forms MTMR3:MTMR4 heterooligomers; regulates the localization of both proteins. The MTMR3:MTMR4 heterooligomer can also recruit both CEP55 and PLK1; occurs during early mitosis, regulates the phosphorylation of CEP55 by PLK1 and its recruitment to the midbody where it can mediate cell abscission. Interacts with SMAD2 and SMAD3; negatively regulates TGF-beta signaling through SMAD2 and SMAD3 dephosphorylation and retention in endosomes. Interacts with SMAD1; negatively regulates BMP signaling through SMAD1 dephosphorylation and retention in endosomes. Post-translationally, ubiquitinated. Ubiquitination by NEDD4 probably leads to proteasomal degradation. In terms of processing, phosphorylated by CDK1 during mitosis. Expressed in brain, heart, kidney, spleen, liver, colon, testis, muscle, placenta, thyroid gland, pancreas, ovary, prostate, skin, peripheral blood, and bone marrow.

It is found in the early endosome membrane. Its subcellular location is the recycling endosome membrane. The protein resides in the late endosome membrane. It localises to the cytoplasmic vesicle. The protein localises to the phagosome membrane. It catalyses the reaction a 1,2-diacyl-sn-glycero-3-phospho-(1D-myo-inositol-3-phosphate) + H2O = a 1,2-diacyl-sn-glycero-3-phospho-(1D-myo-inositol) + phosphate. The enzyme catalyses a 1,2-diacyl-sn-glycero-3-phospho-(1D-myo-inositol-3,5-bisphosphate) + H2O = a 1,2-diacyl-sn-glycero-3-phospho-(1D-myo-inositol-5-phosphate) + phosphate. The catalysed reaction is 1,2-dioctanoyl-sn-glycero-3-phospho-(1-D-myo-inositol-3-phosphate) + H2O = 1,2-dioctanoyl-sn-glycero-3-phospho-(1D-myo-inositol) + phosphate. It carries out the reaction 1,2-dioctanoyl-sn-glycero-3-phospho-(1D-myo-inositol-3,5-bisphosphate) + H2O = 1,2-dioctanoyl-sn-glycero-3-phospho-(1D-myo-inositol-5-phosphate) + phosphate. The phosphatidylinositol-3-phosphate phosphatase activity is inhibited by vanadate. In terms of biological role, lipid phosphatase that specifically dephosphorylates the D-3 position of phosphatidylinositol 3-phosphate and phosphatidylinositol 3,5-bisphosphate, generating phosphatidylinositol and phosphatidylinositol 5-phosphate. Decreases the levels of phosphatidylinositol 3-phosphate, a phospholipid found in cell membranes where it acts as key regulator of both cell signaling and intracellular membrane traffic, in a subset of endosomal membranes to negatively regulate both endocytic recycling and trafficking and/or maturation of endosomes toward lysosomes. Through phosphatidylinositol 3-phosphate turnover in phagosome membranes regulates phagocytosis and phagosome maturation. By decreasing phosphatidylinositol 3-monophosphate (PI3P) levels in immune cells it can also regulate the innate immune response. Beside its lipid phosphatase activity, can also function as a molecular adapter to regulate midbody abscission during mitotic cytokinesis. Can also negatively regulate TGF-beta and BMP signaling through Smad proteins dephosphorylation and retention in endosomes. The polypeptide is Phosphatidylinositol-3,5-bisphosphate 3-phosphatase MTMR4 (Homo sapiens (Human)).